Here is a 586-residue protein sequence, read N- to C-terminus: Anaerobic glycerol-3-phosphate dehydrogenase subunit A1 (586 aa).

6 to 34 serves as a coordination point for FAD; sequence SVLVIGGGSTGTGIARDLAMRGLDVTLVE. The segment at 559-586 is disordered; sequence GGAVADGGRERAADRADDDALGGADGDN. The span at 574 to 586 shows a compositional bias: acidic residues; sequence ADDDALGGADGDN.

The protein belongs to the FAD-dependent glycerol-3-phosphate dehydrogenase family. As to quaternary structure, composed of a catalytic GlpA/B dimer and of membrane bound GlpC. FAD serves as cofactor. Requires FMN as cofactor.

Its subcellular location is the cell membrane. The catalysed reaction is a quinone + sn-glycerol 3-phosphate = dihydroxyacetone phosphate + a quinol. It functions in the pathway polyol metabolism; glycerol degradation via glycerol kinase pathway; glycerone phosphate from sn-glycerol 3-phosphate (anaerobic route): step 1/1. With respect to regulation, up-regulated by glycerol and no inhibition by glucose. Functionally, conversion of glycerol 3-phosphate to dihydroxyacetone phosphate. Required for growth on glycerol and for glycerol metabolism. The sequence is that of Anaerobic glycerol-3-phosphate dehydrogenase subunit A1 (gpdA1) from Haloferax volcanii (strain ATCC 29605 / DSM 3757 / JCM 8879 / NBRC 14742 / NCIMB 2012 / VKM B-1768 / DS2) (Halobacterium volcanii).